Reading from the N-terminus, the 146-residue chain is Nitric oxide reductase subunit C (146 aa).

A helical; Signal-anchor membrane pass occupies residues 13-29; the sequence is IYFGGSVFFILLFLALT. Residues cysteine 61, cysteine 64, and histidine 65 each contribute to the heme c site.

In terms of assembly, heterodimer of cytochromes b (large subunit) and c (small subunit).

It is found in the cell membrane. Functionally, component of the anaerobic respiratory chain that transforms nitrate to dinitrogen (denitrification). In Pseudomonas aeruginosa (strain ATCC 15692 / DSM 22644 / CIP 104116 / JCM 14847 / LMG 12228 / 1C / PRS 101 / PAO1), this protein is Nitric oxide reductase subunit C (norC).